We begin with the raw amino-acid sequence, 850 residues long: Bifunctional levopimaradiene synthase, chloroplastic (850 aa).

A chloroplast-targeting transit peptide spans 1-52 (MALPSSSLSSQIHTGATTQCIPHFHGSLNAGTSAGKRRSLYLRWGKGPSKIV). Lys-250 lines the substrate pocket. Residues Asp-383 and Asp-385 each coordinate Mg(2+). The short motif at 383–386 (DIDD) is the DXDD motif element. Lys-470 lines the substrate pocket. Mg(2+) contacts are provided by Asp-602, Asp-606, Asn-746, Thr-750, and Glu-754. The DDXXD motif motif lies at 602–606 (DDLYD).

This sequence belongs to the terpene synthase family. Tpsd subfamily. Mg(2+) is required as a cofactor. In terms of tissue distribution, expressed in young tissues such as flushing buds and green bark tissues. Lower levels in mature needles and bark.

It is found in the plastid. It localises to the chloroplast. It carries out the reaction (2E,6E,10E)-geranylgeranyl diphosphate = (+)-copalyl diphosphate. It catalyses the reaction (+)-copalyl diphosphate = abieta-8(14),12-diene + diphosphate. The enzyme catalyses (+)-copalyl diphosphate = neoabietadiene + diphosphate. Its pathway is terpene metabolism; oleoresin biosynthesis. In terms of biological role, involved in defensive oleoresin formation in conifers in response to insect attack or other injury. Involved in diterpene (C20) olefins biosynthesis. Bifunctional enzyme that catalyzes two sequential cyclizations of geranylgeranyl diphosphate (GGPP) to levopimaradiene. Levopimaradiene is the major products of the enzyme followed by abietadiene, neoabietadiene and palustradiene. No activity with geranyl diphosphate (GPP) or farnesyl diphosphate (FPP) as substrate. This is Bifunctional levopimaradiene synthase, chloroplastic (LPS) from Pinus taeda (Loblolly pine).